The sequence spans 30 residues: Cycloviolacin-H3 (30 aa).

The segment at residues 1–30 is a cross-link (cyclopeptide (Gly-Asn)); that stretch reads GLPVCGETCFGGTCNTPGCICDPWPVCTRN. Disulfide bonds link C5–C19, C9–C21, and C14–C27.

In terms of processing, this is a cyclic peptide.

Probably participates in a plant defense mechanism. This chain is Cycloviolacin-H3, found in Viola hederacea (Australian violet).